A 274-amino-acid polypeptide reads, in one-letter code: uncharacterized protein (274 aa).

Positions 1–30 (MTIDTPAREDQTLAATHRAMWALGDYALMA) are cleaved as a signal peptide.

It to M.tuberculosis Rv1403c.

This is an uncharacterized protein from Mycobacterium bovis (strain ATCC BAA-935 / AF2122/97).